Reading from the N-terminus, the 150-residue chain is UPF0756 membrane protein PMI1560 (150 aa).

The next 4 helical transmembrane spans lie at 16–36 (GLGI…LLVI), 51–71 (YGMT…IATG), 82–102 (FLNW…WLGA), and 123–143 (VIGV…AGIL).

The protein belongs to the UPF0756 family.

The protein resides in the cell membrane. This Proteus mirabilis (strain HI4320) protein is UPF0756 membrane protein PMI1560.